Consider the following 149-residue polypeptide: MERTYVMVKPDGVQRCLVGEIVSRIEKKGLKIAALRMNVMTEAAAKEHYKEHSERPFFGSLVSFVTSGPSVSMVIEGNNAIKIMRAINGATNPVDALPGTIRGDLAVDMGRNVVHASDAPESAEREIGLHFEESEISGYPRADDEWLYE.

Residues lysine 9, phenylalanine 57, arginine 85, threonine 91, arginine 102, and asparagine 112 each coordinate ATP. The active-site Pros-phosphohistidine intermediate is histidine 115.

The protein belongs to the NDK family. Requires Mg(2+) as cofactor.

The protein localises to the cytoplasm. It catalyses the reaction a 2'-deoxyribonucleoside 5'-diphosphate + ATP = a 2'-deoxyribonucleoside 5'-triphosphate + ADP. It carries out the reaction a ribonucleoside 5'-diphosphate + ATP = a ribonucleoside 5'-triphosphate + ADP. Major role in the synthesis of nucleoside triphosphates other than ATP. The ATP gamma phosphate is transferred to the NDP beta phosphate via a ping-pong mechanism, using a phosphorylated active-site intermediate. This chain is Nucleoside diphosphate kinase, found in Methanococcoides burtonii (strain DSM 6242 / NBRC 107633 / OCM 468 / ACE-M).